Consider the following 463-residue polypeptide: Methionine aminopeptidase 2-1 (463 aa).

The interval 1–98 is disordered; sequence MGSKTPEEQI…PPRVPLSDLF (98 aa). Positions 30–45 are enriched in basic and acidic residues; that stretch reads RGTHLSRDGDGSLGDH. Over residues 46–55 the composition is skewed to acidic residues; it reads GDDDDADEDD. Residues 69–81 show a composition bias toward basic residues; it reads KKKKRPKKKKKPA. H214 contacts substrate. Residues D235, D246, and H315 each coordinate a divalent metal cation. H323 provides a ligand contact to substrate. 2 residues coordinate a divalent metal cation: E348 and E444.

Belongs to the peptidase M24A family. Methionine aminopeptidase eukaryotic type 2 subfamily. Requires Co(2+) as cofactor. Zn(2+) serves as cofactor. The cofactor is Mn(2+). It depends on Fe(2+) as a cofactor.

The protein localises to the cytoplasm. The enzyme catalyses Release of N-terminal amino acids, preferentially methionine, from peptides and arylamides.. In terms of biological role, cotranslationally removes the N-terminal methionine from nascent proteins. The N-terminal methionine is often cleaved when the second residue in the primary sequence is small and uncharged (Met-Ala-, Cys, Gly, Pro, Ser, Thr, or Val). The sequence is that of Methionine aminopeptidase 2-1 from Colletotrichum graminicola (strain M1.001 / M2 / FGSC 10212) (Maize anthracnose fungus).